Here is a 203-residue protein sequence, read N- to C-terminus: Transcriptional regulator GfcR (203 aa).

The protein belongs to the purine/pyrimidine phosphoribosyltransferase family. GfcR subfamily.

This chain is Transcriptional regulator GfcR, found in Methanococcoides burtonii (strain DSM 6242 / NBRC 107633 / OCM 468 / ACE-M).